The primary structure comprises 132 residues: Small heat shock protein hspL (132 aa).

The sHSP domain maps to 15 to 131 (TFTNFVSAPV…VKMSNNNKVE (117 aa)).

It belongs to the small heat shock protein (HSP20) family.

The sequence is that of Small heat shock protein hspL (hspL) from Dictyostelium discoideum (Social amoeba).